The primary structure comprises 471 residues: Amidophosphoribosyltransferase (471 aa).

Cysteine 2 acts as the Nucleophile in catalysis. The region spanning 2 to 224 (CGIFGIYSYE…PGEIIEIKDG (223 aa)) is the Glutamine amidotransferase type-2 domain. Cysteine 255 is a binding site for [4Fe-4S] cluster. Mg(2+)-binding residues include serine 302, aspartate 364, and aspartate 365. [4Fe-4S] cluster-binding residues include cysteine 401, cysteine 450, and cysteine 453.

In the C-terminal section; belongs to the purine/pyrimidine phosphoribosyltransferase family. It depends on Mg(2+) as a cofactor. [4Fe-4S] cluster is required as a cofactor.

It carries out the reaction 5-phospho-beta-D-ribosylamine + L-glutamate + diphosphate = 5-phospho-alpha-D-ribose 1-diphosphate + L-glutamine + H2O. It functions in the pathway purine metabolism; IMP biosynthesis via de novo pathway; N(1)-(5-phospho-D-ribosyl)glycinamide from 5-phospho-alpha-D-ribose 1-diphosphate: step 1/2. In terms of biological role, catalyzes the formation of phosphoribosylamine from phosphoribosylpyrophosphate (PRPP) and glutamine. The polypeptide is Amidophosphoribosyltransferase (Methanocaldococcus jannaschii (strain ATCC 43067 / DSM 2661 / JAL-1 / JCM 10045 / NBRC 100440) (Methanococcus jannaschii)).